A 623-amino-acid polypeptide reads, in one-letter code: Stretch-activated cation channel MID1 (623 aa).

At 1 to 57 (MPAREVYLKRPATRRQLEGICTRYDGQQRITQLDCEEGCSKRTQPPQRLNPRYKSPD) the chain is on the extracellular side. A helical membrane pass occupies residues 58–78 (LIHISFIIVLLCILSMTSSVV). Residues 79–623 (AQTTTGSSSS…DRWGNRWCNG (545 aa)) lie on the Cytoplasmic side of the membrane. The segment covering 524-536 (TSTSSGTFPTPST) has biased composition (low complexity). A disordered region spans residues 524-544 (TSTSSGTFPTPSTVLRTPSSP). Residues 600-623 (SYGDGSAAQGVAAQDRWGNRWCNG) are required for targeting to the cell membrane.

In terms of assembly, forms an oligomer by disulfide bonds. Interacts with CCH1 to form a Ca(2+) influx channel. Interacts (via C-terminus) with CCP1/cytochrome c peroxidase; the interaction may contribute to cellular detoxification of radicals.

Its subcellular location is the cell membrane. In terms of biological role, calcium-permeable, cation-selective stretch-activated channel (SAC) that functions together with CCH1 to mediate calcium entry into cells. May additionally play a role in cellular detoxification of radicals. This chain is Stretch-activated cation channel MID1, found in Cryptococcus neoformans var. grubii serotype A (strain H99 / ATCC 208821 / CBS 10515 / FGSC 9487) (Filobasidiella neoformans var. grubii).